We begin with the raw amino-acid sequence, 248 residues long: ATP synthase subunit a (248 aa).

A propeptide spans 1–3 (MLY) (removed in mature form). 7 consecutive transmembrane segments (helical) span residues 24-44 (MSLT…FFIF), 86-106 (IYMP…LVGL), 117-137 (FALP…IGFV), 146-166 (VLLP…VELL), 183-203 (ITSG…TSGI), 205-225 (LLFV…ELIV), and 227-247 (ILQA…SLIL).

The protein belongs to the ATPase A chain family. As to quaternary structure, F-type ATPases have 2 components, CF(1) - the catalytic core - and CF(0) - the membrane proton channel. CF(1) has five subunits: alpha(3), beta(3), gamma(1), delta(1), epsilon(1). CF(0) has three main subunits: a, b and c.

The protein resides in the mitochondrion inner membrane. Mitochondrial membrane ATP synthase (F(1)F(0) ATP synthase or Complex V) produces ATP from ADP in the presence of a proton gradient across the membrane which is generated by electron transport complexes of the respiratory chain. F-type ATPases consist of two structural domains, F(1) - containing the extramembraneous catalytic core and F(0) - containing the membrane proton channel, linked together by a central stalk and a peripheral stalk. During catalysis, ATP synthesis in the catalytic domain of F(1) is coupled via a rotary mechanism of the central stalk subunits to proton translocation. Key component of the proton channel; it may play a direct role in the translocation of protons across the membrane. The polypeptide is ATP synthase subunit a (Zancudomyces culisetae (Gut fungus)).